The following is a 471-amino-acid chain: Uronate isomerase (471 aa).

It belongs to the metallo-dependent hydrolases superfamily. Uronate isomerase family.

It catalyses the reaction D-glucuronate = D-fructuronate. The enzyme catalyses aldehydo-D-galacturonate = keto-D-tagaturonate. It participates in carbohydrate metabolism; pentose and glucuronate interconversion. This chain is Uronate isomerase, found in Xanthomonas campestris pv. campestris (strain B100).